The chain runs to 736 residues: Polyribonucleotide nucleotidyltransferase (736 aa).

2 residues coordinate Mg(2+): D518 and D524. Residues 584–644 form the KH domain; it reads PSLQIFSINP…QKVEAAKEHI (61 aa). The S1 motif domain occupies 665-732; that stretch reads GEVFKGKVKK…NKNKVELGRA (68 aa).

This sequence belongs to the polyribonucleotide nucleotidyltransferase family. It depends on Mg(2+) as a cofactor.

It localises to the cytoplasm. It carries out the reaction RNA(n+1) + phosphate = RNA(n) + a ribonucleoside 5'-diphosphate. Its function is as follows. Involved in mRNA degradation. Catalyzes the phosphorolysis of single-stranded polyribonucleotides processively in the 3'- to 5'-direction. In Wolinella succinogenes (strain ATCC 29543 / DSM 1740 / CCUG 13145 / JCM 31913 / LMG 7466 / NCTC 11488 / FDC 602W) (Vibrio succinogenes), this protein is Polyribonucleotide nucleotidyltransferase.